A 373-amino-acid chain; its full sequence is 4-hydroxy-3-methylbut-2-en-1-yl diphosphate synthase (flavodoxin) (373 aa).

[4Fe-4S] cluster-binding residues include Cys-270, Cys-273, Cys-305, and Glu-312.

Belongs to the IspG family. It depends on [4Fe-4S] cluster as a cofactor.

The catalysed reaction is (2E)-4-hydroxy-3-methylbut-2-enyl diphosphate + oxidized [flavodoxin] + H2O + 2 H(+) = 2-C-methyl-D-erythritol 2,4-cyclic diphosphate + reduced [flavodoxin]. The protein operates within isoprenoid biosynthesis; isopentenyl diphosphate biosynthesis via DXP pathway; isopentenyl diphosphate from 1-deoxy-D-xylulose 5-phosphate: step 5/6. In terms of biological role, converts 2C-methyl-D-erythritol 2,4-cyclodiphosphate (ME-2,4cPP) into 1-hydroxy-2-methyl-2-(E)-butenyl 4-diphosphate. The protein is 4-hydroxy-3-methylbut-2-en-1-yl diphosphate synthase (flavodoxin) of Erwinia tasmaniensis (strain DSM 17950 / CFBP 7177 / CIP 109463 / NCPPB 4357 / Et1/99).